Reading from the N-terminus, the 134-residue chain is DNA-directed RNA polymerase subunit omega (134 aa).

Positions 77–108 are disordered; the sequence is IDEPEPDPASLLAAGGNASASGDEEEDAPEAV. The span at 85 to 97 shows a compositional bias: low complexity; that stretch reads ASLLAAGGNASAS.

This sequence belongs to the RNA polymerase subunit omega family. The RNAP catalytic core consists of 2 alpha, 1 beta, 1 beta' and 1 omega subunit. When a sigma factor is associated with the core the holoenzyme is formed, which can initiate transcription.

It carries out the reaction RNA(n) + a ribonucleoside 5'-triphosphate = RNA(n+1) + diphosphate. In terms of biological role, promotes RNA polymerase assembly. Latches the N- and C-terminal regions of the beta' subunit thereby facilitating its interaction with the beta and alpha subunits. This is DNA-directed RNA polymerase subunit omega from Rhizobium rhizogenes (strain K84 / ATCC BAA-868) (Agrobacterium radiobacter).